Here is a 258-residue protein sequence, read N- to C-terminus: Heat-labile enterotoxin A chain (258 aa).

The first 18 residues, 1–18, serve as a signal peptide directing secretion; the sequence is MKNITFIFFILLASPLYA. 25 to 39 contacts NAD(+); that stretch reads RADSRPPDEIKRSGG. Glu-128 is a catalytic residue. Cysteines 205 and 217 form a disulfide.

It belongs to the enterotoxin A family. As to quaternary structure, heterohexamer of one A chain and of five B chains.

Functionally, the biological activity of the toxin is produced by the A chain, which activates intracellular adenyl cyclase. The protein is Heat-labile enterotoxin A chain (eltA) of Escherichia coli O78:H11 (strain H10407 / ETEC).